A 619-amino-acid polypeptide reads, in one-letter code: CREB-regulated transcription coactivator 3 (619 aa).

A phosphoserine mark is found at Ser4 and Ser62. A disordered region spans residues 129–148; it reads SQHLDESWPRQQPPWKEEKH. At Thr160 the chain carries Phosphothreonine. Ser162 carries the post-translational modification Phosphoserine; by SIK2. A Glycyl lysine isopeptide (Lys-Gly) (interchain with G-Cter in SUMO2) cross-link involves residue Lys232. Residues Ser273, Ser329, Ser332, Ser370, Ser391, Ser396, and Ser410 each carry the phosphoserine modification. Residues 375–478 are disordered; sequence STTNLSGPSR…TQQPQAAPSL (104 aa). The interval 380–401 is required for interaction with PPP2CA and PPP2R1A; that stretch reads SGPSRRRQPPVSPLTLSPGPEA. Composition is skewed to polar residues over residues 405 to 415 and 422 to 431; these read FSRQLSATSPL and QMVTSEQSPL. At Ser443 the chain carries Phosphoserine. Residues 443–454 show a composition bias toward pro residues; the sequence is SPPPPYPTPQEL. Residues 455-478 show a composition bias toward low complexity; sequence PQPLLQQPHAQEPPTQQPQAAPSL.

Belongs to the TORC family. As to quaternary structure, binding, as a tetramer, through its N-terminal region, with the bZIP domain of CREB1 enhances recruitment of TAF4 to the promoter. 'Arg-314' in the bZIP domain of CREB1 is essential for this interaction. Interacts (when phosphorylated at Ser-162 and Se-273) with 14-3-3 proteins. Interacts with YWHAE. Interacts (when phosphorylated at Ser-391) with phosphatase PP2A catalytic subunit PPP2CA and regulatory subunits PPP2R1A and PPP2R2A. Phosphorylation/dephosphorylation states of Ser-273 are required for regulating transduction of CREB activity. CRTCs/TORCs are inactive when phosphorylated, and active when dephosphorylated at this site. May be phosphorylated at Ser-391 by MAPK3/ERK1 and/or MAPK1/ERK2 or by some cyclin-dependent kinases such as CDK1,CDK2 or CDK5. Following adenylyl cyclase activation, dephosphorylated at Ser-162 and Ser-273 resulting in its dissociation from 14-3-3 proteins probably promoting CRTC3 translocation into the nucleus. As to expression, expressed in brown adipose tissues.

The protein localises to the nucleus. It is found in the cytoplasm. In terms of biological role, transcriptional coactivator for CREB1 which activates transcription through both consensus and variant cAMP response element (CRE) sites. Acts as a coactivator, in the SIK/TORC signaling pathway, being active when dephosphorylated. Acts independently of CREB1 'Ser-133' phosphorylation. Enhances the interaction of CREB1 with TAF4. Regulates the expression of specific CREB-activated genes such as the steroidogenic gene, StAR. Potent coactivator of PPARGC1A and inducer of mitochondrial biogenesis in muscle cells. The chain is CREB-regulated transcription coactivator 3 (Crtc3) from Mus musculus (Mouse).